A 479-amino-acid polypeptide reads, in one-letter code: NAC domain-containing protein 45 (479 aa).

The 152-residue stretch at 6 to 157 (LPPGFRFHPT…AYALCRVFKK (152 aa)) folds into the NAC domain. The DNA-binding element occupies 105 to 163 (IGTKKTLVYYRGRAPHGIRTGWVMHEYRLDETECEPSAYGMQDAYALCRVFKKIVIEAK).

As to expression, expressed in a few sieve element cells before enucleation and in phloem-pole pericycle cells.

Its subcellular location is the nucleus. In terms of biological role, transcription factor directing sieve element enucleation and cytosol degradation. Not required for formation of lytic vacuoles. Regulates, with NAC086, the transcription of NEN1, NEN2, NEN3, NEN4, RTM1, RTM2, UBP16, PLDZETA, ABCB10 and At1g26450. This chain is NAC domain-containing protein 45, found in Arabidopsis thaliana (Mouse-ear cress).